The following is a 115-amino-acid chain: Large ribosomal subunit protein bL19 (115 aa).

The protein belongs to the bacterial ribosomal protein bL19 family.

Functionally, this protein is located at the 30S-50S ribosomal subunit interface and may play a role in the structure and function of the aminoacyl-tRNA binding site. The polypeptide is Large ribosomal subunit protein bL19 (Streptococcus pyogenes serotype M49 (strain NZ131)).